A 431-amino-acid polypeptide reads, in one-letter code: Glucose-6-phosphate isomerase (431 aa).

Glu284 acts as the Proton donor in catalysis. Residues His305 and Lys420 contribute to the active site.

Belongs to the GPI family.

It localises to the cytoplasm. The enzyme catalyses alpha-D-glucose 6-phosphate = beta-D-fructose 6-phosphate. Its pathway is carbohydrate biosynthesis; gluconeogenesis. It participates in carbohydrate degradation; glycolysis; D-glyceraldehyde 3-phosphate and glycerone phosphate from D-glucose: step 2/4. Catalyzes the reversible isomerization of glucose-6-phosphate to fructose-6-phosphate. The chain is Glucose-6-phosphate isomerase from Mycoplasma genitalium (strain ATCC 33530 / DSM 19775 / NCTC 10195 / G37) (Mycoplasmoides genitalium).